Reading from the N-terminus, the 601-residue chain is DNA topoisomerase I, mitochondrial (601 aa).

A mitochondrion-targeting transit peptide spans 1–50 (MRVVRLLRLRAALTLLGEVPRRPASRGVPGSRRTQKGSGARWEKEKHEDG). A disordered region spans residues 22–48 (RPASRGVPGSRRTQKGSGARWEKEKHE). Interaction with DNA stretches follow at residues 261 to 262 (KY), 324 to 329 (RAGNEK), and 421 to 423 (TAK). Residues 268–601 (CSKLKGETAW…LAMAGEDFEF (334 aa)) form the Topo IB-type catalytic domain. The active-site O-(3'-phospho-DNA)-tyrosine intermediate is tyrosine 559.

The protein belongs to the type IB topoisomerase family. It depends on Ca(2+) as a cofactor. Requires Mg(2+) as cofactor. In terms of tissue distribution, ubiquitous; highest in skeletal muscle, heart, brain and fetal liver.

The protein localises to the mitochondrion. It catalyses the reaction ATP-independent breakage of single-stranded DNA, followed by passage and rejoining.. Functionally, releases the supercoiling and torsional tension of DNA introduced during duplication of mitochondrial DNA by transiently cleaving and rejoining one strand of the DNA duplex. Introduces a single-strand break via transesterification at a target site in duplex DNA. The scissile phosphodiester is attacked by the catalytic tyrosine of the enzyme, resulting in the formation of a DNA-(3'-phosphotyrosyl)-enzyme intermediate and the expulsion of a 5'-OH DNA strand. The free DNA strand then rotates around the intact phosphodiester bond on the opposing strand, thus removing DNA supercoils. Finally, in the religation step, the DNA 5'-OH attacks the covalent intermediate to expel the active-site tyrosine and restore the DNA phosphodiester backbone. In Homo sapiens (Human), this protein is DNA topoisomerase I, mitochondrial (TOP1MT).